A 1040-amino-acid chain; its full sequence is MIVLLLFALLWMVEGVFSQLHYTVQEEQEHGTFVGNIAEDLGLDITKLSARGFQTVPNSRTPYLDLNLETGVLYVNEKIDREQICKQSPSCVLHLEVFLENPLELFQVEIEVLDINDNPPSFPEPDLTVEISESATPGTRFPLESAFDPDVGTNSLRDYEITPNSYFSLDVQTQGDGNRFAELVLEKPLDREQQAVHRYVLTAVDGGGGGGVGEGGGGGGGAGLPPQQQRTGTALLTIRVLDSNDNVPAFDQPVYTVSLPENSPPGTLVIQLNATDPDEGQNGEVVYSFSSHISPRARELFGLSPRTGRLEVSGELDYEESPVYQVYVQAKDLGPNAVPAHCKVLVRVLDANDNAPEISFSTVKEAVSEGAAPGTVVALFSVTDRDSEENGQVQCELLGDVPFRLKSSFKNYYTIVTEAPLDREAGDSYTLTVVARDRGEPALSTSKSIQVQVSDVNDNAPRFSQPVYDVYVTENNVPGAYIYAVSATDRDEGANAQLAYSILECQIQGMSVFTYVSINSENGYLYALRSFDYEQLKDFSFQVEARDAGSPQALAGNATVNILIVDQNDNAPAIVAPLPGRNGTPAREVLPRSAEPGYLLTRVAAVDADDGENARLTYSIVRGNEMNLFRMDWRTGELRTARRVPAKRDPQRPYELVIEVRDHGQPPLSSTATLVVQLVDGAVEPQGGGGSGGGGSGEHQRPSRSGGGETSLDLTLILIIALGSVSFIFLLAMIVLAVRCQKEKKLNIYTCLASDCCLCCCCCGGGGSTCCGRQARARKKKLSKSDIMLVQSSNVPSNPAQVPIEESGGFGSHHHNQNYCYQVCLTPESAKTDLMFLKPCSPSRSTDTEHNPCGAIVTGYTDQQPDIISNGSILSNETKHQRAELSYLVDRPRRVNSSAFQEADIVSSKDSGHGDSEQGDSDHDATNRAQSAGMDLFSNCTEECKALGHSDRCWMPSFVPSDGRQAADYRSNLHVPGMDSVPDTEVFETPEAQPGAERSFSTFGKEKALHSTLERKELDGLLTNTRAPYKPPYLTRKRIC.

The signal sequence occupies residues 1 to 18 (MIVLLLFALLWMVEGVFS). 6 consecutive Cadherin domains span residues 19-122 (QLHY…PPSF), 123-250 (PEPD…VPAF), 251-358 (DQPV…APEI), 359-463 (SFST…APRF), 464-574 (SQPV…APAI), and 582-690 (NGTP…GGGG). The Extracellular portion of the chain corresponds to 19-715 (QLHYTVQEEQ…GGGETSLDLT (697 aa)). The span at 207-223 (GGGGGVGEGGGGGGGAG) shows a compositional bias: gly residues. Residues 207 to 228 (GGGGGVGEGGGGGGGAGLPPQQ) are disordered. An N-linked (GlcNAc...) asparagine glycan is attached at asparagine 273. N-linked (GlcNAc...) asparagine glycosylation occurs at asparagine 557. The segment covering 686 to 697 (QGGGGSGGGGSG) has biased composition (gly residues). The segment at 686–708 (QGGGGSGGGGSGEHQRPSRSGGG) is disordered. A helical membrane pass occupies residues 716–736 (LILIIALGSVSFIFLLAMIVL). At 737–1040 (AVRCQKEKKL…PPYLTRKRIC (304 aa)) the chain is on the cytoplasmic side. The tract at residues 899–927 (AFQEADIVSSKDSGHGDSEQGDSDHDATN) is disordered. Residues 910–926 (DSGHGDSEQGDSDHDAT) are compositionally biased toward basic and acidic residues.

Moderately expressed in all regions of the brain examined, as well as in testis and ovary, and low expression in all other tissues tested.

The protein resides in the cell membrane. Its function is as follows. Potential calcium-dependent cell-adhesion protein. (Microbial infection) Acts as a receptor for Western equine encephalitis virus. The chain is Protocadherin-10 (PCDH10) from Homo sapiens (Human).